We begin with the raw amino-acid sequence, 840 residues long: DNA gyrase subunit A (840 aa).

A Topo IIA-type catalytic domain is found at leucine 51–leucine 516. The active-site O-(5'-phospho-DNA)-tyrosine intermediate is tyrosine 139. The short motif at glutamine 543–glycine 549 is the GyrA-box element.

This sequence belongs to the type II topoisomerase GyrA/ParC subunit family. In terms of assembly, heterotetramer, composed of two GyrA and two GyrB chains. In the heterotetramer, GyrA contains the active site tyrosine that forms a transient covalent intermediate with DNA, while GyrB binds cofactors and catalyzes ATP hydrolysis.

Its subcellular location is the cytoplasm. The enzyme catalyses ATP-dependent breakage, passage and rejoining of double-stranded DNA.. In terms of biological role, a type II topoisomerase that negatively supercoils closed circular double-stranded (ds) DNA in an ATP-dependent manner to modulate DNA topology and maintain chromosomes in an underwound state. Negative supercoiling favors strand separation, and DNA replication, transcription, recombination and repair, all of which involve strand separation. Also able to catalyze the interconversion of other topological isomers of dsDNA rings, including catenanes and knotted rings. Type II topoisomerases break and join 2 DNA strands simultaneously in an ATP-dependent manner. The protein is DNA gyrase subunit A of Ureaplasma parvum serovar 3 (strain ATCC 700970).